A 456-amino-acid chain; its full sequence is Rap guanine nucleotide exchange factor-like 1 (456 aa).

One can recognise a Ras-GEF domain in the interval 218 to 454 (EPEDVANHLT…FELSYKLEAN (237 aa)).

Its function is as follows. Probable guanine nucleotide exchange factor (GEF). The chain is Rap guanine nucleotide exchange factor-like 1 (RAPGEFL1) from Pongo pygmaeus (Bornean orangutan).